Reading from the N-terminus, the 272-residue chain is Phosphoglycolate phosphatase (272 aa).

Asp19 functions as the Nucleophile in the catalytic mechanism. Positions 19, 21, and 182 each coordinate Mg(2+).

This sequence belongs to the HAD-like hydrolase superfamily. CbbY/CbbZ/Gph/YieH family. It depends on Mg(2+) as a cofactor.

It carries out the reaction 2-phosphoglycolate + H2O = glycolate + phosphate. It functions in the pathway organic acid metabolism; glycolate biosynthesis; glycolate from 2-phosphoglycolate: step 1/1. In terms of biological role, specifically catalyzes the dephosphorylation of 2-phosphoglycolate. Is involved in the dissimilation of the intracellular 2-phosphoglycolate formed during the DNA repair of 3'-phosphoglycolate ends, a major class of DNA lesions induced by oxidative stress. The polypeptide is Phosphoglycolate phosphatase (Pseudomonas syringae pv. syringae (strain B728a)).